The primary structure comprises 319 residues: METKGGTVKAASGFNATEDAQVLRKAMKGLGTDEDAIIGVLACRNTAQRQEIRTAYKSTIGRDLLEDLKSELSSNFEQVILGMMTPTVLYDVQELRRAMKGAGTDEGCLIEILASRNPEEIRRINQTYQQQYGRSLEEDICSDTSFMFQRVLVSLTAGGRDEGNYLDDALVRQDAQDLYEAGEKRWGTDEVKFLSILCSRNRNHLLHVFDEYKRISQKDIEQSIKSETSGSFEDALLAIVKCMRNKPAYFAERLYKSMKGLGTDDSTLIRVMVSRAEIDMLDIPANFKRVYGKSLYSFIKGDTSGDYRKVLLILCGGDD.

Phosphothreonine is present on Thr-7. Position 12 is a phosphoserine (Ser-12). Annexin repeat units follow at residues 14–85 (FNAT…GMMT), 86–157 (PTVL…SLTA), 169–241 (ALVR…AIVK), and 245–316 (NKPA…ILCG). Lys-213, Lys-293, and Lys-300 each carry N6-acetyllysine.

This sequence belongs to the annexin family.

The protein localises to the zymogen granule membrane. In terms of biological role, calcium/phospholipid-binding protein which promotes membrane fusion and is involved in exocytosis. The polypeptide is Annexin A4 (Anxa4) (Rattus norvegicus (Rat)).